We begin with the raw amino-acid sequence, 852 residues long: MQRKTLLSACIALALSGQGWAADITEVETTTGEKKNTNVTCPADPGKLSPEELKRLPSECSPLVEQNLMPWLSTGAAALITALAVVELNDDDDHHHRNNSPLPPTPPDDESDDTPVPPTPGGDEIIPDDPDDTPTPPKPVSFNNDVILDKTEKTLTIRDSVFTYTENADGTISLQDSNGRKATINLWQIDEANNTVALEGVSADGATKWQYNHNGELVITGDNATVNNNGKTTVDGKDSTGTEINGNNGKVIQDGDLDVSGGGHGIDITGDSATVDNKGTMTVTDPESMGIQIDGDKAIVNNEGESTITNGGTGTQINGDDATANNNGKTTVDGKDSTGTEINGNNGKVIQDGDLDVSGGGHGIDITGDSATVDNKGTMTVTDPESIGIQVDGDQAVVNNEGESAITNGGTGTQINGDDATANNNGKTTVDGKDSTGTEIAGNNGKVIQDGDLDVSGGGHGIDITGDSATVDNKGTMTVTDPESIGIQIDGDQAIVNNEGESTITNGGTGTQINGNDATANNSGKTTVDGKDSTGTKIAGNIGIVNLDGSLTVTGGAHGVENIGDNGTVNNKGDIVVSDTGSIGVLINGEGATVSNTGDVNVSNEATGFSITTNSGKVSLAGSMQVGDFSTGVDLNGNNNSVTLAAKDLKVVGQKATGINVSGDANTVNITGNVLVDKDKTADNAAEYFFDPSVGINVYGSDNNVTLDGKLTVVSDSEVTSRQSNLFDGSAEKTSGLVVIGDGNTVNMNGGLELIGEKNALADGSQVTSLRTGYSYTSVIVVSGESSVYLNGDTTISGEFPLGFAGVIRVQDKALLEIGSGATLTMQDIDSFEHHGTRTLDLPLYFQTSVIT.

A signal peptide spans 1–21 (MQRKTLLSACIALALSGQGWA). Disordered stretches follow at residues 30 to 50 (TTGE…KLSP), 91 to 145 (DDDH…FNND), 307 to 354 (TITN…QDGD), 407 to 449 (TNGG…KVIQ), and 506 to 531 (NGGT…VDGK). A compositionally biased stretch (low complexity) spans 307–319 (TITNGGTGTQING). The span at 339 to 348 (GTEINGNNGK) shows a compositional bias: polar residues. Residues 506–516 (NGGTGTQINGN) show a composition bias toward low complexity. Polar residues predominate over residues 517–526 (DATANNSGKT).

The protein localises to the secreted. The full-length protein (which is about 2000 amino acids long) is part of the autotransporter family. This is Exported protein YdbA (ydbA) from Escherichia coli (strain K12).